A 249-amino-acid polypeptide reads, in one-letter code: Phosphoadenosine 5'-phosphosulfate reductase (249 aa).

Cysteine 230 functions as the Nucleophile; cysteine thiosulfonate intermediate in the catalytic mechanism.

It belongs to the PAPS reductase family. CysH subfamily.

It localises to the cytoplasm. It carries out the reaction [thioredoxin]-disulfide + sulfite + adenosine 3',5'-bisphosphate + 2 H(+) = [thioredoxin]-dithiol + 3'-phosphoadenylyl sulfate. The protein operates within sulfur metabolism; hydrogen sulfide biosynthesis; sulfite from sulfate: step 3/3. Its function is as follows. Catalyzes the formation of sulfite from phosphoadenosine 5'-phosphosulfate (PAPS) using thioredoxin as an electron donor. The protein is Phosphoadenosine 5'-phosphosulfate reductase of Synechocystis sp. (strain ATCC 27184 / PCC 6803 / Kazusa).